Here is a 702-residue protein sequence, read N- to C-terminus: Archaeal Lon protease (702 aa).

Residues 1–63 (MSNESTNDAP…VGVEGDVSID (63 aa)) form a disordered region. Residues 1 to 183 (MSNESTNDAP…EARKRNQMRS (183 aa)) lie on the Cytoplasmic side of the membrane. Over residues 10–48 (PPDDDPDDPEPSVDHDDTDGLQDDPADSVDDAGEVDDLE) the composition is skewed to acidic residues. Residue 117–124 (GSPGTGKS) participates in ATP binding. Residues 184–201 (FLMWIMILLAVGYALLIA) traverse the membrane as a helical segment. The Extracellular segment spans residues 202-206 (TPARP). The helical transmembrane segment at 207 to 223 (LLALLSAAGIYLLFRYT) threads the bilayer. Residues 224 to 702 (NRGSDAMVPK…GTTGGNPSPQ (479 aa)) lie on the Cytoplasmic side of the membrane. The Lon proteolytic domain occupies 487–667 (EEAVGRVNGL…SEVLDVALVG (181 aa)). Active-site residues include Ser-574 and Lys-617.

It belongs to the peptidase S16 family. Archaeal LonB subfamily. As to quaternary structure, homohexamer. Organized in a ring with a central cavity.

It is found in the cell membrane. In terms of biological role, ATP-dependent serine protease that mediates the selective degradation of mutant and abnormal proteins as well as certain short-lived regulatory proteins. Degrades polypeptides processively. This is Archaeal Lon protease from Halobacterium salinarum (strain ATCC 700922 / JCM 11081 / NRC-1) (Halobacterium halobium).